The following is a 98-amino-acid chain: Large ribosomal subunit protein uL23 (98 aa).

This sequence belongs to the universal ribosomal protein uL23 family. As to quaternary structure, part of the 50S ribosomal subunit. Contacts protein L29, and trigger factor when it is bound to the ribosome.

In terms of biological role, one of the early assembly proteins it binds 23S rRNA. One of the proteins that surrounds the polypeptide exit tunnel on the outside of the ribosome. Forms the main docking site for trigger factor binding to the ribosome. This chain is Large ribosomal subunit protein uL23, found in Clostridium acetobutylicum (strain ATCC 824 / DSM 792 / JCM 1419 / IAM 19013 / LMG 5710 / NBRC 13948 / NRRL B-527 / VKM B-1787 / 2291 / W).